The chain runs to 312 residues: Putative HTH-type transcriptional regulatory protein TV0294 (312 aa).

The region spanning 133 to 186 (LRERRNELNLSIGNISSYLGVSRRSVSLYENGSAATIDIFIRLRNILKADIVDH) is the HTH cro/C1-type domain. A DNA-binding region (H-T-H motif) is located at residues 144 to 163 (IGNISSYLGVSRRSVSLYEN).

The sequence is that of Putative HTH-type transcriptional regulatory protein TV0294 from Thermoplasma volcanium (strain ATCC 51530 / DSM 4299 / JCM 9571 / NBRC 15438 / GSS1).